Reading from the N-terminus, the 65-residue chain is Protein translocase subunit SecE (65 aa).

The Cytoplasmic segment spans residues 1 to 27; sequence MEKLKEFLKGVRDELKRVVWPSRELVV. The helical transmembrane segment at 28–59 threads the bilayer; it reads KATISVIIFSLAIGVYLWILDLTFTKIISFIL. Residues 60 to 65 are Periplasmic-facing; sequence SLRGSL.

Belongs to the SecE/SEC61-gamma family. In terms of assembly, component of the Sec protein translocase complex. Heterotrimer consisting of SecY, SecE and SecG subunits. The heterotrimers can form oligomers, although 1 heterotrimer is thought to be able to translocate proteins. Interacts with SecDF, and other proteins may be involved. The channel interacts with SecA via subunit SecY.

The protein resides in the cell inner membrane. Functionally, essential subunit of the protein translocation channel SecYEG. Clamps together the 2 halves of SecY. May contact the channel plug during translocation. This chain is Protein translocase subunit SecE, found in Aquifex aeolicus (strain VF5).